Consider the following 379-residue polypeptide: Cytochrome b (379 aa).

The next 4 membrane-spanning stretches (helical) occupy residues 33–53 (FGSL…FLAM), 77–98 (WLIR…FIHV), 113–133 (WNIG…GYVL), and 178–198 (FFAF…VHLL). Heme b-binding residues include His-83 and His-97. 2 residues coordinate heme b: His-182 and His-196. Residue His-201 participates in a ubiquinone binding. 4 consecutive transmembrane segments (helical) span residues 226–246 (TKDL…VLFF), 288–308 (LGGV…PLLN), 320–340 (VTQV…WIGG), and 347–367 (FTTI…ILIP).

The protein belongs to the cytochrome b family. The cytochrome bc1 complex contains 11 subunits: 3 respiratory subunits (MT-CYB, CYC1 and UQCRFS1), 2 core proteins (UQCRC1 and UQCRC2) and 6 low-molecular weight proteins (UQCRH/QCR6, UQCRB/QCR7, UQCRQ/QCR8, UQCR10/QCR9, UQCR11/QCR10 and a cleavage product of UQCRFS1). This cytochrome bc1 complex then forms a dimer. The cofactor is heme b.

It is found in the mitochondrion inner membrane. Functionally, component of the ubiquinol-cytochrome c reductase complex (complex III or cytochrome b-c1 complex) that is part of the mitochondrial respiratory chain. The b-c1 complex mediates electron transfer from ubiquinol to cytochrome c. Contributes to the generation of a proton gradient across the mitochondrial membrane that is then used for ATP synthesis. The sequence is that of Cytochrome b (MT-CYB) from Akodon cursor (Cursor grass mouse).